The primary structure comprises 1755 residues: Transposon Ty1-DR6 Gag-Pol polyprotein (1755 aa).

3 stretches are compositionally biased toward polar residues: residues Met-1–Ser-23, Thr-48–Ser-60, and Gln-127–Phe-152. Disordered regions lie at residues Met-1–Gln-93, Pro-126–Met-174, and Gly-352–Thr-421. Residues Thr-153 to Thr-165 show a composition bias toward low complexity. Residues Asn-299 to His-401 form an RNA-binding region. Positions Asn-402 to Ser-418 are enriched in low complexity. Residue Ser-416 is modified to Phosphoserine. The active-site For protease activity; shared with dimeric partner is the Asp-461. The segment at Asn-583 to Cys-640 is integrase-type zinc finger-like. The 176-residue stretch at Asn-660–Pro-835 folds into the Integrase catalytic domain. Mg(2+)-binding residues include Asp-671 and Asp-736. Disordered regions lie at residues Ser-956–Lys-1087, Arg-1092–Pro-1111, and Asp-1130–Thr-1187. The span at Ser-960 to Thr-969 shows a compositional bias: low complexity. Positions Ser-1005–Thr-1015 are enriched in polar residues. Over residues Glu-1038–Ser-1053 the composition is skewed to basic and acidic residues. Polar residues-rich tracts occupy residues Tyr-1054 to Asp-1082 and Pro-1101 to Pro-1111. Residues Lys-1178–Arg-1212 carry the Bipartite nuclear localization signal motif. The 139-residue stretch at Asn-1338–Gln-1476 folds into the Reverse transcriptase Ty1/copia-type domain. Mg(2+) contacts are provided by Asp-1346, Asp-1427, Asp-1428, Asp-1610, Glu-1652, and Asp-1685. The 143-residue stretch at Asp-1610–Lys-1752 folds into the RNase H Ty1/copia-type domain.

As to quaternary structure, the capsid protein forms a homotrimer, from which the VLPs are assembled. The protease is a homodimer, whose active site consists of two apposed aspartic acid residues. Initially, virus-like particles (VLPs) are composed of the structural unprocessed proteins Gag and Gag-Pol, and also contain the host initiator methionine tRNA (tRNA(i)-Met) which serves as a primer for minus-strand DNA synthesis, and a dimer of genomic Ty RNA. Processing of the polyproteins occurs within the particle and proceeds by an ordered pathway, called maturation. First, the protease (PR) is released by autocatalytic cleavage of the Gag-Pol polyprotein yielding capsid protein p45 and a Pol-p154 precursor protein. This cleavage is a prerequisite for subsequent processing of Pol-p154 at the remaining sites to release the mature structural and catalytic proteins. Maturation takes place prior to the RT reaction and is required to produce transposition-competent VLPs.

Its subcellular location is the cytoplasm. The protein localises to the nucleus. It catalyses the reaction DNA(n) + a 2'-deoxyribonucleoside 5'-triphosphate = DNA(n+1) + diphosphate. The enzyme catalyses Endonucleolytic cleavage to 5'-phosphomonoester.. Its function is as follows. Capsid protein (CA) is the structural component of the virus-like particle (VLP), forming the shell that encapsulates the retrotransposons dimeric RNA genome. The particles are assembled from trimer-clustered units and there are holes in the capsid shells that allow for the diffusion of macromolecules. CA also has nucleocapsid-like chaperone activity, promoting primer tRNA(i)-Met annealing to the multipartite primer-binding site (PBS), dimerization of Ty1 RNA and initiation of reverse transcription. Functionally, the aspartyl protease (PR) mediates the proteolytic cleavages of the Gag and Gag-Pol polyproteins after assembly of the VLP. Reverse transcriptase/ribonuclease H (RT) is a multifunctional enzyme that catalyzes the conversion of the retro-elements RNA genome into dsDNA within the VLP. The enzyme displays a DNA polymerase activity that can copy either DNA or RNA templates, and a ribonuclease H (RNase H) activity that cleaves the RNA strand of RNA-DNA heteroduplexes during plus-strand synthesis and hydrolyzes RNA primers. The conversion leads to a linear dsDNA copy of the retrotransposon that includes long terminal repeats (LTRs) at both ends. In terms of biological role, integrase (IN) targets the VLP to the nucleus, where a subparticle preintegration complex (PIC) containing at least integrase and the newly synthesized dsDNA copy of the retrotransposon must transit the nuclear membrane. Once in the nucleus, integrase performs the integration of the dsDNA into the host genome. The chain is Transposon Ty1-DR6 Gag-Pol polyprotein (TY1B-DR6) from Saccharomyces cerevisiae (strain ATCC 204508 / S288c) (Baker's yeast).